Consider the following 413-residue polypeptide: Arginine biosynthesis bifunctional protein ArgJ (413 aa).

Substrate contacts are provided by Thr158, Lys184, Thr195, Glu285, Asn408, and Ser413. Thr195 (nucleophile) is an active-site residue.

This sequence belongs to the ArgJ family. Heterotetramer of two alpha and two beta chains.

Its subcellular location is the cytoplasm. It catalyses the reaction N(2)-acetyl-L-ornithine + L-glutamate = N-acetyl-L-glutamate + L-ornithine. The enzyme catalyses L-glutamate + acetyl-CoA = N-acetyl-L-glutamate + CoA + H(+). Its pathway is amino-acid biosynthesis; L-arginine biosynthesis; L-ornithine and N-acetyl-L-glutamate from L-glutamate and N(2)-acetyl-L-ornithine (cyclic): step 1/1. It participates in amino-acid biosynthesis; L-arginine biosynthesis; N(2)-acetyl-L-ornithine from L-glutamate: step 1/4. Its function is as follows. Catalyzes two activities which are involved in the cyclic version of arginine biosynthesis: the synthesis of N-acetylglutamate from glutamate and acetyl-CoA as the acetyl donor, and of ornithine by transacetylation between N(2)-acetylornithine and glutamate. This chain is Arginine biosynthesis bifunctional protein ArgJ, found in Brucella melitensis biotype 1 (strain ATCC 23456 / CCUG 17765 / NCTC 10094 / 16M).